A 349-amino-acid chain; its full sequence is tRNA pseudouridine synthase D (349 aa).

Phenylalanine 27 is a substrate binding site. Catalysis depends on aspartate 80, which acts as the Nucleophile. Asparagine 129 provides a ligand contact to substrate. Residues 155–303 form the TRUD domain; the sequence is GVPNYFGAQR…VEAARRAMLL (149 aa). Phenylalanine 329 provides a ligand contact to substrate.

It belongs to the pseudouridine synthase TruD family.

It carries out the reaction uridine(13) in tRNA = pseudouridine(13) in tRNA. Functionally, responsible for synthesis of pseudouridine from uracil-13 in transfer RNAs. This chain is tRNA pseudouridine synthase D, found in Shigella boydii serotype 18 (strain CDC 3083-94 / BS512).